We begin with the raw amino-acid sequence, 282 residues long: Phosphate transport system permease protein PstA (282 aa).

Transmembrane regions (helical) follow at residues 22–42 (LSYI…FTLI), 71–91 (LIGS…IGVL), 111–131 (FLND…VYSL), 136–156 (IEHF…IPIV), 198–218 (ILTG…PLLF), and 254–274 (NLAW…NIFT). The region spanning 71-274 (LIGSFFIVGA…LFVLCLNIFT (204 aa)) is the ABC transmembrane type-1 domain.

This sequence belongs to the binding-protein-dependent transport system permease family. CysTW subfamily.

Its subcellular location is the cell inner membrane. In terms of biological role, part of the binding-protein-dependent transport system for phosphate; probably responsible for the translocation of the substrate across the membrane. This chain is Phosphate transport system permease protein PstA (pstA), found in Haemophilus influenzae (strain ATCC 51907 / DSM 11121 / KW20 / Rd).